The following is a 334-amino-acid chain: GTPase Obg (334 aa).

In terms of domain architecture, Obg spans 1-159 (MRFVDEVVIK…KEVRLELNLL (159 aa)). The region spanning 160-331 (ADVALLGLPN…LAKKLNEFLQ (172 aa)) is the OBG-type G domain. Residues 166 to 173 (GLPNAGKS), 191 to 195 (FTTMY), 212 to 215 (DIPG), 282 to 285 (NKID), and 312 to 314 (SAA) each bind GTP. Residues serine 173 and threonine 193 each contribute to the Mg(2+) site.

This sequence belongs to the TRAFAC class OBG-HflX-like GTPase superfamily. OBG GTPase family. In terms of assembly, monomer. It depends on Mg(2+) as a cofactor.

The protein localises to the cytoplasm. In terms of biological role, an essential GTPase which binds GTP, GDP and possibly (p)ppGpp with moderate affinity, with high nucleotide exchange rates and a fairly low GTP hydrolysis rate. Plays a role in control of the cell cycle, stress response, ribosome biogenesis and in those bacteria that undergo differentiation, in morphogenesis control. The polypeptide is GTPase Obg (Francisella tularensis subsp. tularensis (strain FSC 198)).